The sequence spans 699 residues: Elongation factor G (699 aa).

One can recognise a tr-type G domain in the interval 8–288 (EDYRNFGIMA…AVVDYLPSPL (281 aa)). GTP-binding positions include 17 to 24 (AHIDAGKT), 86 to 90 (DTPGH), and 140 to 143 (NKMD).

The protein belongs to the TRAFAC class translation factor GTPase superfamily. Classic translation factor GTPase family. EF-G/EF-2 subfamily.

Its subcellular location is the cytoplasm. Its function is as follows. Catalyzes the GTP-dependent ribosomal translocation step during translation elongation. During this step, the ribosome changes from the pre-translocational (PRE) to the post-translocational (POST) state as the newly formed A-site-bound peptidyl-tRNA and P-site-bound deacylated tRNA move to the P and E sites, respectively. Catalyzes the coordinated movement of the two tRNA molecules, the mRNA and conformational changes in the ribosome. The chain is Elongation factor G from Rhizobium etli (strain CIAT 652).